Here is a 274-residue protein sequence, read N- to C-terminus: Secreted RxLR effector protein 40 (274 aa).

The signal sequence occupies residues 1 to 21 (MRLYTQVVAASLVATLAIVDS). The short motif at 35-53 (RFLRQDNATVARVSEDGER) is the RxLR-dEER element. 3 N-linked (GlcNAc...) asparagine glycosylation sites follow: N41, N74, and N258.

Belongs to the RxLR effector family.

It is found in the secreted. The protein resides in the host nucleus. The protein localises to the host cytoplasm. Its function is as follows. Secreted effector that completely suppresses the host cell death induced by cell death-inducing proteins. The polypeptide is Secreted RxLR effector protein 40 (Plasmopara viticola (Downy mildew of grapevine)).